The chain runs to 681 residues: PTS system glucose-specific EIICBA component (681 aa).

A PTS EIIC type-1 domain is found at 3–414; it reads KKLFGQLQRI…LKYKTPGRED (412 aa). A run of 10 helical transmembrane segments spans residues 16-36, 73-93, 126-146, 170-190, 199-219, 273-293, 303-323, 328-348, 355-375, and 383-403; these read LMLP…GTAM, MIFA…AAIA, ILGI…GALA, FVPI…ALIW, AFST…FGFI, FMQG…LAIY, VVAG…ITEP, FLFV…LSFL, LHLG…GILP, and VIPV…FLIV. Residues 425–506 form the PTS EIIB type-1 domain; the sequence is TELPYAVLEA…QQIMNGQVVE (82 aa). Cysteine 447 serves as the catalytic Phosphocysteine intermediate; for EIIB activity. In terms of domain architecture, PTS EIIA type-1 spans 551 to 655; the sequence is DQVFSEKMMG…SDITPIIVTQ (105 aa). Histidine 603 (tele-phosphohistidine intermediate; for EIIA activity) is an active-site residue.

It localises to the cell membrane. The enzyme catalyses N(pros)-phospho-L-histidyl-[protein] + D-glucose(out) = D-glucose 6-phosphate(in) + L-histidyl-[protein]. In terms of biological role, the phosphoenolpyruvate-dependent sugar phosphotransferase system (sugar PTS), a major carbohydrate active transport system, catalyzes the phosphorylation of incoming sugar substrates concomitantly with their translocation across the cell membrane. This system is involved in glucose transport. In Staphylococcus aureus (strain MRSA252), this protein is PTS system glucose-specific EIICBA component (ptsG).